We begin with the raw amino-acid sequence, 476 residues long: Ribulose bisphosphate carboxylase large chain (476 aa).

Residues Asn116 and Thr166 each contribute to the substrate site. The active-site Proton acceptor is the Lys168. Residue Lys170 coordinates substrate. 3 residues coordinate Mg(2+): Lys194, Asp196, and Glu197. Lys194 carries the post-translational modification N6-carboxylysine. His286 functions as the Proton acceptor in the catalytic mechanism. Substrate is bound by residues Arg287, His319, and Ser371.

This sequence belongs to the RuBisCO large chain family. Type I subfamily. Heterohexadecamer of 8 large chains and 8 small chains. Mg(2+) serves as cofactor.

It carries out the reaction 2 (2R)-3-phosphoglycerate + 2 H(+) = D-ribulose 1,5-bisphosphate + CO2 + H2O. It catalyses the reaction D-ribulose 1,5-bisphosphate + O2 = 2-phosphoglycolate + (2R)-3-phosphoglycerate + 2 H(+). Its function is as follows. RuBisCO catalyzes two reactions: the carboxylation of D-ribulose 1,5-bisphosphate, the primary event in carbon dioxide fixation, as well as the oxidative fragmentation of the pentose substrate. Both reactions occur simultaneously and in competition at the same active site. The sequence is that of Ribulose bisphosphate carboxylase large chain from Pseudonocardia dioxanivorans (strain ATCC 55486 / DSM 44775 / JCM 13855 / CB1190).